Here is a 155-residue protein sequence, read N- to C-terminus: Ribosomal RNA large subunit methyltransferase H (155 aa).

Residues leucine 72, glycine 103, and 122–127 (LGRMVW) contribute to the S-adenosyl-L-methionine site.

Belongs to the RNA methyltransferase RlmH family. In terms of assembly, homodimer.

It is found in the cytoplasm. The catalysed reaction is pseudouridine(1915) in 23S rRNA + S-adenosyl-L-methionine = N(3)-methylpseudouridine(1915) in 23S rRNA + S-adenosyl-L-homocysteine + H(+). Its function is as follows. Specifically methylates the pseudouridine at position 1915 (m3Psi1915) in 23S rRNA. The protein is Ribosomal RNA large subunit methyltransferase H of Cereibacter sphaeroides (strain ATCC 17029 / ATH 2.4.9) (Rhodobacter sphaeroides).